The sequence spans 379 residues: uncharacterized protein (379 aa).

The protein belongs to the glycosyltransferase 28 family.

This is an uncharacterized protein from Methanosarcina acetivorans (strain ATCC 35395 / DSM 2834 / JCM 12185 / C2A).